The primary structure comprises 445 residues: NAD(P)H coenzyme A polysulfide/persulfide reductase (445 aa).

Residue 16 to 17 (AA) coordinates FAD. CoA is bound at residue arginine 27. Residues 38-39 (EA) and 45-47 (HAP) each bind FAD. CoA is bound by residues 44 to 48 (SHAPC), 65 to 66 (YY), and arginine 75. The active-site Redox-active is the cysteine 48. 3 residues coordinate FAD: valine 85, aspartate 283, and alanine 301. CoA contacts are provided by asparagine 305 and lysine 361. Tyrosine 425 is an FAD binding site. Residues tryptophan 433 and arginine 441 each contribute to the CoA site.

It belongs to the class-III pyridine nucleotide-disulfide oxidoreductase family. As to quaternary structure, homodimer. Homotetramer. The cofactor is FAD.

The enzyme catalyses NADP(+) + 2 CoA = CoA-disulfide + NADPH + H(+). It carries out the reaction NAD(+) + 2 CoA = CoA-disulfide + NADH + H(+). Catalyzes the NAD(P)H-dependent reduction of polysulfide, CoA-polysulfides, and CoA persulfide, as well as the reduction of a range of other small persulfides, including TNB and glutathione persulfides. The likely in vivo substrates are di-, poly-, and persulfide derivatives of coenzyme A, although polysulfide itself is also efficiently reduced. Shows coenzyme A disulfide reductase (CoADR) activity with both NADH and NADPH, with a preference for NADPH. May also play a role in the reduction of elemental sulfur. The sequence is that of NAD(P)H coenzyme A polysulfide/persulfide reductase from Pyrococcus horikoshii (strain ATCC 700860 / DSM 12428 / JCM 9974 / NBRC 100139 / OT-3).